The sequence spans 481 residues: GTPase Der (481 aa).

EngA-type G domains follow at residues 47 to 210 (PVLA…PDVS) and 221 to 394 (RRVA…ESWE). Residues 53–60 (GRPNVGKS), 100–104 (DTGGW), 162–165 (NKVD), 227–234 (GRPNVGKS), 274–278 (DTAGI), and 339–342 (NKWD) contribute to the GTP site. In terms of domain architecture, KH-like spans 395-477 (TRIPTGKFNA…PIVLNMRVRE (83 aa)).

This sequence belongs to the TRAFAC class TrmE-Era-EngA-EngB-Septin-like GTPase superfamily. EngA (Der) GTPase family. Associates with the 50S ribosomal subunit.

Its function is as follows. GTPase that plays an essential role in the late steps of ribosome biogenesis. The chain is GTPase Der from Leifsonia xyli subsp. xyli (strain CTCB07).